The chain runs to 339 residues: S-adenosylmethionine:tRNA ribosyltransferase-isomerase (339 aa).

The protein belongs to the QueA family. As to quaternary structure, monomer.

It is found in the cytoplasm. The enzyme catalyses 7-aminomethyl-7-carbaguanosine(34) in tRNA + S-adenosyl-L-methionine = epoxyqueuosine(34) in tRNA + adenine + L-methionine + 2 H(+). The protein operates within tRNA modification; tRNA-queuosine biosynthesis. Its function is as follows. Transfers and isomerizes the ribose moiety from AdoMet to the 7-aminomethyl group of 7-deazaguanine (preQ1-tRNA) to give epoxyqueuosine (oQ-tRNA). The polypeptide is S-adenosylmethionine:tRNA ribosyltransferase-isomerase (Campylobacter fetus subsp. fetus (strain 82-40)).